The chain runs to 302 residues: N-acetyl-D-glucosamine kinase (302 aa).

Residues 4 to 11 and 133 to 140 contribute to the ATP site; these read GFDVGGTK and GFGGGFIY. Zn(2+)-binding residues include His157, Cys177, Cys179, and Cys184.

This sequence belongs to the ROK (NagC/XylR) family. NagK subfamily.

It catalyses the reaction N-acetyl-D-glucosamine + ATP = N-acetyl-D-glucosamine 6-phosphate + ADP + H(+). Its pathway is cell wall biogenesis; peptidoglycan recycling. Its function is as follows. Catalyzes the phosphorylation of N-acetyl-D-glucosamine (GlcNAc) derived from cell-wall degradation, yielding GlcNAc-6-P. This Vibrio parahaemolyticus serotype O3:K6 (strain RIMD 2210633) protein is N-acetyl-D-glucosamine kinase.